The chain runs to 389 residues: Acetyl-CoA decarbonylase/synthase complex subunit delta (389 aa).

The protein belongs to the CdhD family. Heterodimer of delta and gamma chains. The ACDS complex is made up of alpha, epsilon, beta, gamma and delta chains with a probable stoichiometry of (alpha(2)epsilon(2))(4)-beta(8)-(gamma(1)delta(1))(8).

In terms of biological role, part of a complex that catalyzes the reversible cleavage of acetyl-CoA, allowing autotrophic growth from CO(2). Probably maintains the overall quaternary structure of the ACDS complex. In Methanothermobacter thermautotrophicus (strain ATCC 29096 / DSM 1053 / JCM 10044 / NBRC 100330 / Delta H) (Methanobacterium thermoautotrophicum), this protein is Acetyl-CoA decarbonylase/synthase complex subunit delta.